The following is a 673-amino-acid chain: DNA mismatch repair protein MutL (673 aa).

This sequence belongs to the DNA mismatch repair MutL/HexB family.

In terms of biological role, this protein is involved in the repair of mismatches in DNA. It is required for dam-dependent methyl-directed DNA mismatch repair. May act as a 'molecular matchmaker', a protein that promotes the formation of a stable complex between two or more DNA-binding proteins in an ATP-dependent manner without itself being part of a final effector complex. The protein is DNA mismatch repair protein MutL of Ehrlichia chaffeensis (strain ATCC CRL-10679 / Arkansas).